Here is a 685-residue protein sequence, read N- to C-terminus: Methionine--tRNA ligase (685 aa).

The 'HIGH' region motif lies at 12-22 (PYANGSIHLGH). C143, C146, C156, and C159 together coordinate Zn(2+). The 'KMSKS' region motif lies at 339–343 (KMSKS). K342 is an ATP binding site. Residues 582–685 (DFMKIDMRVA…AGAQPGDKVG (104 aa)) form the tRNA-binding domain.

The protein belongs to the class-I aminoacyl-tRNA synthetase family. MetG type 1 subfamily. In terms of assembly, homodimer. Requires Zn(2+) as cofactor.

It is found in the cytoplasm. It catalyses the reaction tRNA(Met) + L-methionine + ATP = L-methionyl-tRNA(Met) + AMP + diphosphate. Functionally, is required not only for elongation of protein synthesis but also for the initiation of all mRNA translation through initiator tRNA(fMet) aminoacylation. The protein is Methionine--tRNA ligase of Neisseria meningitidis serogroup A / serotype 4A (strain DSM 15465 / Z2491).